Reading from the N-terminus, the 418-residue chain is Beta-arrestin-1 (418 aa).

An interaction with SRC region spans residues 1–163 (MGDKGTRVFK…LEEKIHKRNS (163 aa)). An interaction with CHRM2 region spans residues 45–86 (PEYLKERRVYVTLTCAFRYGREDLDVLGLTFRKDLFVANVQS). Position 47 is a phosphotyrosine (Tyr47). Residues Lys250, Met255, Lys324, and Lys326 each coordinate 1D-myo-inositol hexakisphosphate. The interaction with TRAF6 stretch occupies residues 318–418 (IVSYKVKVKL…GTGSPHLNNR (101 aa)). Disordered stretches follow at residues 353–374 (HPKPKEEPPHREVPESETPVDT) and 397–418 (KGMKDDKDEEDDGTGSPHLNNR). A compositionally biased stretch (basic and acidic residues) spans 355–366 (KPKEEPPHREVP). Ser412 is subject to Phosphoserine. Residue Ser412 is modified to Phosphoserine; by GRK5.

The protein belongs to the arrestin family. Monomer. Homodimer. Homooligomer; the self-association is mediated by InsP6-binding. Heterooligomer with ARRB2; the association is mediated by InsP6-binding. Interacts with ADRB2 (phosphorylated). Interacts with CHRM2 (phosphorylated). Interacts with LHCGR. Interacts with CYTH2 and CASR. Interacts with AP2B1 (dephosphorylated at 'Tyr-737'); phosphorylation of AP2B1 at 'Tyr-737' disrupts the interaction. Interacts (dephosphorylated at Ser-412) with CLTC. Interacts with CCR2 and GRK2. Interacts with CRR5. Interacts with PTAFR (phosphorylated on serine residues). Interacts with CLTC and MAP2K3. Interacts with CREB1. Interacts with TRAF6. Interacts with IGF1R and MDM2. Interacts with C5AR1. Interacts with PDE4D. Interacts with SRC (via the SH3 domain and the protein kinase domain); the interaction is independent of the phosphorylation state of SRC C-terminus. Interacts with TACR1. Interacts with RAF1. Interacts with CHUK, IKBKB and MAP3K14. Interacts with DVL1; the interaction is enhanced by phosphorylation of DVL1. Interacts with DVL2; the interaction is enhanced by phosphorylation of DVL2. Interacts with IGF1R. Associates with MAP kinase p38. Part of a MAPK signaling complex consisting of TACR1, ARRB1, SRC, MAPK1 (activated) and MAPK3 (activated). Part of a MAPK signaling complex consisting of F2RL1, ARRB1, RAF1, MAPK1 (activated) and MAPK3 (activated). Interacts with GPR143. Interacts with MAP2K4/MKK4. Interacts with HCK and CXCR1 (phosphorylated). Interacts with ACKR3 and ACKR4. Interacts with ARRDC1; the interaction is direct. Interacts with GPR61, GPR62 and GPR135. In terms of processing, constitutively phosphorylated at Ser-412 in the cytoplasm. At the plasma membrane, is rapidly dephosphorylated, a process that is required for clathrin binding and beta-2 adrenergic receptor/ADRB2 endocytosis but not for ADRB2 binding and desensitization. Once internalized, is rephosphorylated. The ubiquitination status appears to regulate the formation and trafficking of beta-arrestin-GPCR complexes and signaling. Ubiquitination appears to occur GPCR-specific. Ubiquitinated by MDM2; the ubiquitination is required for rapid internalization of ADRB2. Deubiquitinated by USP33; the deubiquitination leads to a dissociation of the beta-arrestin-GPCR complex. Stimulation of a class A GPCR, such as ADRB2, induces transient ubiquitination and subsequently promotes association with USP33. In terms of tissue distribution, predominantly localized in neuronal tissues and in the spleen.

It is found in the cytoplasm. The protein resides in the nucleus. It localises to the cell membrane. Its subcellular location is the membrane. The protein localises to the clathrin-coated pit. It is found in the cell projection. The protein resides in the pseudopodium. It localises to the cytoplasmic vesicle. Functions in regulating agonist-mediated G-protein coupled receptor (GPCR) signaling by mediating both receptor desensitization and resensitization processes. During homologous desensitization, beta-arrestins bind to the GPRK-phosphorylated receptor and sterically preclude its coupling to the cognate G-protein; the binding appears to require additional receptor determinants exposed only in the active receptor conformation. The beta-arrestins target many receptors for internalization by acting as endocytic adapters (CLASPs, clathrin-associated sorting proteins) and recruiting the GPRCs to the adapter protein 2 complex 2 (AP-2) in clathrin-coated pits (CCPs). However, the extent of beta-arrestin involvement appears to vary significantly depending on the receptor, agonist and cell type. Internalized arrestin-receptor complexes traffic to intracellular endosomes, where they remain uncoupled from G-proteins. Two different modes of arrestin-mediated internalization occur. Class A receptors, like ADRB2, OPRM1, ENDRA, D1AR and ADRA1B dissociate from beta-arrestin at or near the plasma membrane and undergo rapid recycling. Class B receptors, like AVPR2, AGTR1, NTSR1, TRHR and TACR1 internalize as a complex with arrestin and traffic with it to endosomal vesicles, presumably as desensitized receptors, for extended periods of time. Receptor resensitization then requires that receptor-bound arrestin is removed so that the receptor can be dephosphorylated and returned to the plasma membrane. Involved in internalization of P2RY4 and UTP-stimulated internalization of P2RY2. Involved in phosphorylation-dependent internalization of OPRD1 ands subsequent recycling. Involved in the degradation of cAMP by recruiting cAMP phosphodiesterases to ligand-activated receptors. Beta-arrestins function as multivalent adapter proteins that can switch the GPCR from a G-protein signaling mode that transmits short-lived signals from the plasma membrane via small molecule second messengers and ion channels to a beta-arrestin signaling mode that transmits a distinct set of signals that are initiated as the receptor internalizes and transits the intracellular compartment. Acts as a signaling scaffold for MAPK pathways such as MAPK1/3 (ERK1/2). ERK1/2 activated by the beta-arrestin scaffold is largely excluded from the nucleus and confined to cytoplasmic locations such as endocytic vesicles, also called beta-arrestin signalosomes. Recruits c-Src/SRC to ADRB2 resulting in ERK activation. GPCRs for which the beta-arrestin-mediated signaling relies on both ARRB1 and ARRB2 (codependent regulation) include ADRB2, F2RL1 and PTH1R. For some GPCRs the beta-arrestin-mediated signaling relies on either ARRB1 or ARRB2 and is inhibited by the other respective beta-arrestin form (reciprocal regulation). Inhibits ERK1/2 signaling in AGTR1- and AVPR2-mediated activation (reciprocal regulation). Is required for SP-stimulated endocytosis of NK1R and recruits c-Src/SRC to internalized NK1R resulting in ERK1/2 activation, which is required for the antiapoptotic effects of SP. Is involved in proteinase-activated F2RL1-mediated ERK activity. Acts as a signaling scaffold for the AKT1 pathway. Is involved in alpha-thrombin-stimulated AKT1 signaling. Is involved in IGF1-stimulated AKT1 signaling leading to increased protection from apoptosis. Involved in activation of the p38 MAPK signaling pathway and in actin bundle formation. Involved in F2RL1-mediated cytoskeletal rearrangement and chemotaxis. Involved in AGTR1-mediated stress fiber formation by acting together with GNAQ to activate RHOA. Appears to function as signaling scaffold involved in regulation of MIP-1-beta-stimulated CCR5-dependent chemotaxis. Involved in attenuation of NF-kappa-B-dependent transcription in response to GPCR or cytokine stimulation by interacting with and stabilizing CHUK. May serve as nuclear messenger for GPCRs. Involved in OPRD1-stimulated transcriptional regulation by translocating to CDKN1B and FOS promoter regions and recruiting EP300 resulting in acetylation of histone H4. Involved in regulation of LEF1 transcriptional activity via interaction with DVL1 and/or DVL2 Also involved in regulation of receptors other than GPCRs. Involved in Toll-like receptor and IL-1 receptor signaling through the interaction with TRAF6 which prevents TRAF6 autoubiquitination and oligomerization required for activation of NF-kappa-B and JUN. Binds phosphoinositides. Binds inositolhexakisphosphate (InsP6). Involved in IL8-mediated granule release in neutrophils. Required for atypical chemokine receptor ACKR2-induced RAC1-LIMK1-PAK1-dependent phosphorylation of cofilin (CFL1) and for the up-regulation of ACKR2 from endosomal compartment to cell membrane, increasing its efficiency in chemokine uptake and degradation. Involved in the internalization of the atypical chemokine receptor ACKR3. Negatively regulates the NOTCH signaling pathway by mediating the ubiquitination and degradation of NOTCH1 by ITCH. Participates in the recruitment of the ubiquitin-protein ligase to the receptor. The chain is Beta-arrestin-1 from Rattus norvegicus (Rat).